The sequence spans 590 residues: MPLKPISFRWSKTSVRSVPNPFMYGPDNLNKPLSRASQMAERVHQQTPSSTNYQQRRYFSYYYYQFPKIPRPKRNMLYYSTWSRNPVTNASNANKPSKRHMLPFGSFKISKRSFANANQKLKTKLKKLKMGKERRRFIRWWTVTSLTIVLGGVYAKIKYERGDHEENPYKIRPQSWHLYAYSALPLKTISRLWGQVNSINLPVWIRSPSYRVYSAIFGVNLDEMENPDLSSYKNLSEFFYRDIKPDARPIADGDLVSPADGKVLKFGVVENGEIEQVKGMTYSIDALLGIDTGKLAAPTHSLNFDYNSDDETIVKRDEEFAKINGISYSMDDLVGGNSKSTYHMNELTYKDEHDGTAAGERASFSKELRVAEELTPNPVEYFRKKNLYFAVIYLAPGDYHHFHSPTSWVTTLRRHFIGELFSVAPFFQKTLQGLFVLNERVALLGYWKYGFFSMVPVGATNVGSIVVNFDKDLKTNDIYEHEVYSSASSVNESTPLLDQKDYSANDILTITNSEYEDKKRKKLRKNTVYEATYTNASRLLGGYPLSKGQDIGGFKLGSTVVLVFEAPENFKFNLKVGEKVKVGQSLGGFV.

The N-terminal 59 residues, 1-59, are a transit peptide targeting the mitochondrion; sequence MPLKPISFRWSKTSVRSVPNPFMYGPDNLNKPLSRASQMAERVHQQTPSSTNYQQRRYF. The Mitochondrial matrix portion of the chain corresponds to 60 to 140; that stretch reads SYYYYQFPKI…GKERRRFIRW (81 aa). The chain crosses the membrane as a helical span at residues 141–159; sequence WTVTSLTIVLGGVYAKIKY. The Mitochondrial intermembrane segment spans residues 160–590; sequence ERGDHEENPY…KVGQSLGGFV (431 aa). Active-site charge relay system; for autoendoproteolytic cleavage activity residues include Asp260, His403, and Ser558. The Schiff-base intermediate with substrate; via pyruvic acid; for decarboxylase activity role is filled by Ser558. At Ser558 the chain carries Pyruvic acid (Ser); by autocatalysis.

The protein belongs to the phosphatidylserine decarboxylase family. PSD-B subfamily. Eukaryotic type I sub-subfamily. As to quaternary structure, heterodimer of a large membrane-associated beta subunit and a small pyruvoyl-containing alpha subunit. It depends on pyruvate as a cofactor. Is synthesized initially as an inactive proenzyme. Formation of the active enzyme involves a self-maturation process in which the active site pyruvoyl group is generated from an internal serine residue via an autocatalytic post-translational modification. Two non-identical subunits are generated from the proenzyme in this reaction, and the pyruvate is formed at the N-terminus of the alpha chain, which is derived from the carboxyl end of the proenzyme. The autoendoproteolytic cleavage occurs by a canonical serine protease mechanism, in which the side chain hydroxyl group of the serine supplies its oxygen atom to form the C-terminus of the beta chain, while the remainder of the serine residue undergoes an oxidative deamination to produce ammonia and the pyruvoyl prosthetic group on the alpha chain. During this reaction, the Ser that is part of the protease active site of the proenzyme becomes the pyruvoyl prosthetic group, which constitutes an essential element of the active site of the mature decarboxylase.

It localises to the mitochondrion inner membrane. The catalysed reaction is a 1,2-diacyl-sn-glycero-3-phospho-L-serine + H(+) = a 1,2-diacyl-sn-glycero-3-phosphoethanolamine + CO2. The protein operates within phospholipid metabolism; phosphatidylethanolamine biosynthesis; phosphatidylethanolamine from CDP-diacylglycerol: step 2/2. Functionally, catalyzes the formation of phosphatidylethanolamine (PtdEtn) from phosphatidylserine (PtdSer). Plays a central role in phospholipid metabolism and in the interorganelle trafficking of phosphatidylserine. Important for virulence. The protein is Phosphatidylserine decarboxylase proenzyme 1, mitochondrial of Candida albicans (strain SC5314 / ATCC MYA-2876) (Yeast).